Consider the following 377-residue polypeptide: uncharacterized protein (377 aa).

Residues 1–25 (MAQQTNVAGQKTEKQRKAPFRADHV) are disordered. The segment covering 11 to 24 (KTEKQRKAPFRADH) has biased composition (basic and acidic residues).

To B.subtilis YxjG.

This is an uncharacterized protein from Bacillus subtilis (strain 168).